The sequence spans 271 residues: uncharacterized protein (271 aa).

This is an uncharacterized protein from Human cytomegalovirus (strain Merlin) (HHV-5).